Consider the following 357-residue polypeptide: Protein-glutamate methylesterase/protein-glutamine glutaminase (357 aa).

The Response regulatory domain maps to arginine 3–serine 120. 4-aspartylphosphate is present on aspartate 54. One can recognise a CheB-type methylesterase domain in the interval glutamate 165–lysine 357. Residues serine 177, histidine 204, and aspartate 300 contribute to the active site.

It belongs to the CheB family. In terms of processing, phosphorylated by CheA. Phosphorylation of the N-terminal regulatory domain activates the methylesterase activity.

It is found in the cytoplasm. The catalysed reaction is [protein]-L-glutamate 5-O-methyl ester + H2O = L-glutamyl-[protein] + methanol + H(+). The enzyme catalyses L-glutaminyl-[protein] + H2O = L-glutamyl-[protein] + NH4(+). In terms of biological role, involved in chemotaxis. Part of a chemotaxis signal transduction system that modulates chemotaxis in response to various stimuli. Catalyzes the demethylation of specific methylglutamate residues introduced into the chemoreceptors (methyl-accepting chemotaxis proteins or MCP) by CheR. Also mediates the irreversible deamidation of specific glutamine residues to glutamic acid. The polypeptide is Protein-glutamate methylesterase/protein-glutamine glutaminase (Lawsonia intracellularis (strain PHE/MN1-00)).